Here is a 352-residue protein sequence, read N- to C-terminus: 4-hydroxy-2-oxovalerate aldolase (352 aa).

In terms of domain architecture, Pyruvate carboxyltransferase spans 13 to 265 (VRLTDTSLRD…KTGIDFFDIA (253 aa)). Residue 21-22 (RD) coordinates substrate. Asp-22 lines the Mn(2+) pocket. His-25 (proton acceptor) is an active-site residue. Substrate is bound by residues Ser-175 and His-204. His-204 and His-206 together coordinate Mn(2+). Tyr-295 lines the substrate pocket.

Belongs to the 4-hydroxy-2-oxovalerate aldolase family.

It catalyses the reaction (S)-4-hydroxy-2-oxopentanoate = acetaldehyde + pyruvate. This Mycolicibacterium paratuberculosis (strain ATCC BAA-968 / K-10) (Mycobacterium paratuberculosis) protein is 4-hydroxy-2-oxovalerate aldolase.